A 77-amino-acid chain; its full sequence is Acyl carrier protein (77 aa).

Residues 2–77 (SDVADRVKKI…DAVKFISEAS (76 aa)) enclose the Carrier domain. Ser37 carries the O-(pantetheine 4'-phosphoryl)serine modification.

It belongs to the acyl carrier protein (ACP) family. Post-translationally, 4'-phosphopantetheine is transferred from CoA to a specific serine of apo-ACP by AcpS. This modification is essential for activity because fatty acids are bound in thioester linkage to the sulfhydryl of the prosthetic group.

It is found in the cytoplasm. The protein operates within lipid metabolism; fatty acid biosynthesis. Its function is as follows. Carrier of the growing fatty acid chain in fatty acid biosynthesis. The protein is Acyl carrier protein of Ruegeria sp. (strain TM1040) (Silicibacter sp.).